Reading from the N-terminus, the 57-residue chain is Large ribosomal subunit protein bL33 (57 aa).

The protein belongs to the bacterial ribosomal protein bL33 family.

This chain is Large ribosomal subunit protein bL33, found in Shewanella pealeana (strain ATCC 700345 / ANG-SQ1).